A 235-amino-acid chain; its full sequence is Aspartate/glutamate leucyltransferase (235 aa).

The protein belongs to the R-transferase family. Bpt subfamily.

The protein resides in the cytoplasm. It carries out the reaction N-terminal L-glutamyl-[protein] + L-leucyl-tRNA(Leu) = N-terminal L-leucyl-L-glutamyl-[protein] + tRNA(Leu) + H(+). The catalysed reaction is N-terminal L-aspartyl-[protein] + L-leucyl-tRNA(Leu) = N-terminal L-leucyl-L-aspartyl-[protein] + tRNA(Leu) + H(+). Its function is as follows. Functions in the N-end rule pathway of protein degradation where it conjugates Leu from its aminoacyl-tRNA to the N-termini of proteins containing an N-terminal aspartate or glutamate. The chain is Aspartate/glutamate leucyltransferase from Pseudomonas fluorescens (strain SBW25).